Reading from the N-terminus, the 248-residue chain is Triosephosphate isomerase (248 aa).

9–11 (NWK) is a substrate binding site. The active-site Electrophile is the histidine 101. Catalysis depends on glutamate 170, which acts as the Proton acceptor. Substrate-binding positions include glycine 176, serine 208, and 229–230 (GG).

The protein belongs to the triosephosphate isomerase family. Homodimer.

It is found in the cytoplasm. It carries out the reaction D-glyceraldehyde 3-phosphate = dihydroxyacetone phosphate. It participates in carbohydrate biosynthesis; gluconeogenesis. Its pathway is carbohydrate degradation; glycolysis; D-glyceraldehyde 3-phosphate from glycerone phosphate: step 1/1. Its function is as follows. Involved in the gluconeogenesis. Catalyzes stereospecifically the conversion of dihydroxyacetone phosphate (DHAP) to D-glyceraldehyde-3-phosphate (G3P). This Mycoplasmopsis pulmonis (strain UAB CTIP) (Mycoplasma pulmonis) protein is Triosephosphate isomerase.